The primary structure comprises 302 residues: Aspartate carbamoyltransferase catalytic subunit (302 aa).

Residues Arg53 and Thr54 each contribute to the carbamoyl phosphate site. Lys82 lines the L-aspartate pocket. Arg103, His131, and Gln134 together coordinate carbamoyl phosphate. 2 residues coordinate L-aspartate: Arg164 and Arg223. Residues Leu260 and Pro261 each contribute to the carbamoyl phosphate site.

Belongs to the aspartate/ornithine carbamoyltransferase superfamily. ATCase family. Heterooligomer of catalytic and regulatory chains.

It catalyses the reaction carbamoyl phosphate + L-aspartate = N-carbamoyl-L-aspartate + phosphate + H(+). The protein operates within pyrimidine metabolism; UMP biosynthesis via de novo pathway; (S)-dihydroorotate from bicarbonate: step 2/3. In terms of biological role, catalyzes the condensation of carbamoyl phosphate and aspartate to form carbamoyl aspartate and inorganic phosphate, the committed step in the de novo pyrimidine nucleotide biosynthesis pathway. This chain is Aspartate carbamoyltransferase catalytic subunit, found in Methanococcus maripaludis (strain C5 / ATCC BAA-1333).